The chain runs to 409 residues: TNF receptor-associated factor 1 (409 aa).

At serine 139 the chain carries Phosphoserine. Residues 167 to 256 (EELALQHLVK…EHSLRLMEEA (90 aa)) adopt a coiled-coil conformation. Glycyl lysine isopeptide (Lys-Gly) (interchain with G-Cter in ubiquitin) cross-links involve residues lysine 178 and lysine 186. One can recognise an MATH domain in the interval 259–405 (DGTFLWKITN…DDTMFLKCIV (147 aa)).

Homotrimer. Heterotrimer with TRAF2. Interacts with TNFRSF1A/TNFR1, TNFRSF1B/TNFR2, TNFRSF4, TNFRSF5/CD40, TNFRSF8/CD30, TNFRSF9/CD137, TNFRSF11A/RANK, TNFRSF13C, TNFRSF18/AITR, TNFRSF17/BCMA, TNFRSF19/TROY, TNFRSF19L/RELT, XEDAR, EDAR, Epstein-Barr virus BNFL1/LMP-1, TANK/ITRAF, TRAIP and RIPK2. Interacts with BIRC2 and BIRC3 N-terminus; a single BIRC2 or BIRC3 molecule interacts with a heterotrimer formed by TRAF1 and TRAF2. Interacts with MAP3K14. Interacts with NFATC2IP, TRAFD1 and with HIVEP3. Interacts with GPS2. Post-translationally, polyubiquitinated by BIRC2 and/or BIRC3, leading to its subsequent proteasomal degradation. Ubiquitinated by the SCF(FBXL2) complex, leading to its degradation by the proteasome.

It is found in the cytoplasm. Functionally, adapter molecule that regulates the activation of NF-kappa-B and JNK. Plays a role in the regulation of cell survival and apoptosis. The heterotrimer formed by TRAF1 and TRAF2 is part of a E3 ubiquitin-protein ligase complex that promotes ubiquitination of target proteins, such as MAP3K14. The TRAF1/TRAF2 complex recruits the antiapoptotic E3 protein-ubiquitin ligases BIRC2 and BIRC3 to TNFRSF1B/TNFR2. This is TNF receptor-associated factor 1 (Traf1) from Mus musculus (Mouse).